The primary structure comprises 142 residues: HTH-type transcriptional regulator LrpA1 (142 aa).

Residues 1-72 (MSTESTEERI…GQSIAMVGID (72 aa)) enclose the HTH asnC-type domain. Positions 22–41 (YAAIAERADVSKPTVRKYID) form a DNA-binding region, H-T-H motif.

Functionally, transcription factor that regulates genes involved in amino acid metabolism. Represses the aspB3 gene, coding for an aspartate transaminase, in the presence of L-aspartate. Another target gene is the basal transcriptional regulator tfbB. Also binds its own promoter. The polypeptide is HTH-type transcriptional regulator LrpA1 (lrpA1) (Halobacterium salinarum (strain ATCC 29341 / DSM 671 / R1)).